The chain runs to 208 residues: Large ribosomal subunit protein uL4 (208 aa).

A disordered region spans residues 46–84 (QGTHKAKTRAEVRGGGRKPFRQKGTGNARQGSTRSPLMI). Over residues 69-80 (GTGNARQGSTRS) the composition is skewed to polar residues.

This sequence belongs to the universal ribosomal protein uL4 family. Part of the 50S ribosomal subunit.

One of the primary rRNA binding proteins, this protein initially binds near the 5'-end of the 23S rRNA. It is important during the early stages of 50S assembly. It makes multiple contacts with different domains of the 23S rRNA in the assembled 50S subunit and ribosome. Its function is as follows. Forms part of the polypeptide exit tunnel. The protein is Large ribosomal subunit protein uL4 of Chlorobium limicola (strain DSM 245 / NBRC 103803 / 6330).